The primary structure comprises 365 residues: Peptide chain release factor 1 (365 aa).

N5-methylglutamine is present on Gln242.

Belongs to the prokaryotic/mitochondrial release factor family. In terms of processing, methylated by PrmC. Methylation increases the termination efficiency of RF1.

The protein resides in the cytoplasm. Its function is as follows. Peptide chain release factor 1 directs the termination of translation in response to the peptide chain termination codons UAG and UAA. The sequence is that of Peptide chain release factor 1 from Fusobacterium nucleatum subsp. nucleatum (strain ATCC 25586 / DSM 15643 / BCRC 10681 / CIP 101130 / JCM 8532 / KCTC 2640 / LMG 13131 / VPI 4355).